The chain runs to 503 residues: Secreted RxLR effector protein RXLR-C08 (503 aa).

The N-terminal stretch at 1–22 is a signal peptide; sequence MRLCGVASAFLSTLILIAHIDA. N-linked (GlcNAc...) asparagine glycosylation is found at Asn27, Asn35, and Asn45. The dEER signature appears at 57 to 60; the sequence is DEER. Asn108, Asn197, and Asn374 each carry an N-linked (GlcNAc...) asparagine glycan.

Belongs to the RxLR effector family.

The protein localises to the secreted. It localises to the host Golgi apparatus. In terms of biological role, secreted effector that suppresses pattern-triggered immunity (PTI) in plant host. The sequence is that of Secreted RxLR effector protein RXLR-C08 from Plasmopara halstedii (Downy mildew of sunflower).